Reading from the N-terminus, the 104-residue chain is Seminal ribonuclease (104 aa).

4 disulfides stabilise this stretch: Cys12–Cys70, Cys26–Cys81, Cys44–Cys96, and Cys51–Cys58. Residues 27–31 (KPVNT), Lys52, and Arg71 each bind substrate.

Belongs to the pancreatic ribonuclease family. In terms of assembly, homodimer; disulfide-linked.

It is found in the secreted. It catalyses the reaction an [RNA] containing cytidine + H2O = an [RNA]-3'-cytidine-3'-phosphate + a 5'-hydroxy-ribonucleotide-3'-[RNA].. It carries out the reaction an [RNA] containing uridine + H2O = an [RNA]-3'-uridine-3'-phosphate + a 5'-hydroxy-ribonucleotide-3'-[RNA].. In Saiga tatarica (Saiga antelope), this protein is Seminal ribonuclease (SRN).